Here is a 332-residue protein sequence, read N- to C-terminus: tRNA dimethylallyltransferase (332 aa).

14–21 (GPTASGKT) contributes to the ATP binding site. 16–21 (TASGKT) contacts substrate. Residues 39–42 (DSMQ) are interaction with substrate tRNA. The disordered stretch occupies residues 313–332 (KRSSKHDCKPQHPRSSTREL). A compositionally biased stretch (basic and acidic residues) spans 317–332 (KHDCKPQHPRSSTREL).

This sequence belongs to the IPP transferase family. In terms of assembly, monomer. Requires Mg(2+) as cofactor.

It carries out the reaction adenosine(37) in tRNA + dimethylallyl diphosphate = N(6)-dimethylallyladenosine(37) in tRNA + diphosphate. Its function is as follows. Catalyzes the transfer of a dimethylallyl group onto the adenine at position 37 in tRNAs that read codons beginning with uridine, leading to the formation of N6-(dimethylallyl)adenosine (i(6)A). The protein is tRNA dimethylallyltransferase of Staphylococcus haemolyticus (strain JCSC1435).